Reading from the N-terminus, the 353-residue chain is D-alanine--D-alanine ligase (353 aa).

In terms of domain architecture, ATP-grasp spans 141 to 349 (KAAFAAAGLS…LPQLVAELVD (209 aa)). 176–231 (EQELGYPCFVKPANLGSSVGITKANNRDELLAGLHQAAALDPRLLVEQGVNARELE) lines the ATP pocket. Positions 302, 316, and 318 each coordinate Mg(2+).

It belongs to the D-alanine--D-alanine ligase family. The cofactor is Mg(2+). Mn(2+) serves as cofactor.

Its subcellular location is the cytoplasm. The enzyme catalyses 2 D-alanine + ATP = D-alanyl-D-alanine + ADP + phosphate + H(+). It functions in the pathway cell wall biogenesis; peptidoglycan biosynthesis. In terms of biological role, cell wall formation. The sequence is that of D-alanine--D-alanine ligase from Synechococcus sp. (strain WH7803).